The sequence spans 270 residues: 4-hydroxy-tetrahydrodipicolinate reductase (270 aa).

NAD(+) contacts are provided by residues 9 to 14 and Glu-35; that span reads GAGGRM. NADP(+) is bound at residue Arg-36. Residues 99–101 and 123–126 contribute to the NAD(+) site; these read GTT and ASNY. His-156 (proton donor/acceptor) is an active-site residue. His-157 provides a ligand contact to (S)-2,3,4,5-tetrahydrodipicolinate. Lys-160 (proton donor) is an active-site residue. Residue 166–167 participates in (S)-2,3,4,5-tetrahydrodipicolinate binding; it reads GT.

It belongs to the DapB family.

Its subcellular location is the cytoplasm. The catalysed reaction is (S)-2,3,4,5-tetrahydrodipicolinate + NAD(+) + H2O = (2S,4S)-4-hydroxy-2,3,4,5-tetrahydrodipicolinate + NADH + H(+). The enzyme catalyses (S)-2,3,4,5-tetrahydrodipicolinate + NADP(+) + H2O = (2S,4S)-4-hydroxy-2,3,4,5-tetrahydrodipicolinate + NADPH + H(+). Its pathway is amino-acid biosynthesis; L-lysine biosynthesis via DAP pathway; (S)-tetrahydrodipicolinate from L-aspartate: step 4/4. Its function is as follows. Catalyzes the conversion of 4-hydroxy-tetrahydrodipicolinate (HTPA) to tetrahydrodipicolinate. The protein is 4-hydroxy-tetrahydrodipicolinate reductase of Histophilus somni (strain 129Pt) (Haemophilus somnus).